A 484-amino-acid chain; its full sequence is tRNA sulfurtransferase (484 aa).

The 105-residue stretch at 63–167 (EAFAERLACI…NDNLYLIDKR (105 aa)) folds into the THUMP domain. Residues 185-186 (LI), Lys267, Gly289, and Gln298 contribute to the ATP site. Cys346 and Cys458 form a disulfide bridge. Residues 406 to 484 (ISAGEIIIDV…GYNNVKVYRP (79 aa)) form the Rhodanese domain. Cys458 serves as the catalytic Cysteine persulfide intermediate.

The protein belongs to the ThiI family.

It is found in the cytoplasm. It carries out the reaction [ThiI sulfur-carrier protein]-S-sulfanyl-L-cysteine + a uridine in tRNA + 2 reduced [2Fe-2S]-[ferredoxin] + ATP + H(+) = [ThiI sulfur-carrier protein]-L-cysteine + a 4-thiouridine in tRNA + 2 oxidized [2Fe-2S]-[ferredoxin] + AMP + diphosphate. It catalyses the reaction [ThiS sulfur-carrier protein]-C-terminal Gly-Gly-AMP + S-sulfanyl-L-cysteinyl-[cysteine desulfurase] + AH2 = [ThiS sulfur-carrier protein]-C-terminal-Gly-aminoethanethioate + L-cysteinyl-[cysteine desulfurase] + A + AMP + 2 H(+). It functions in the pathway cofactor biosynthesis; thiamine diphosphate biosynthesis. Its function is as follows. Catalyzes the ATP-dependent transfer of a sulfur to tRNA to produce 4-thiouridine in position 8 of tRNAs, which functions as a near-UV photosensor. Also catalyzes the transfer of sulfur to the sulfur carrier protein ThiS, forming ThiS-thiocarboxylate. This is a step in the synthesis of thiazole, in the thiamine biosynthesis pathway. The sulfur is donated as persulfide by IscS. This chain is tRNA sulfurtransferase, found in Shewanella pealeana (strain ATCC 700345 / ANG-SQ1).